We begin with the raw amino-acid sequence, 441 residues long: Proline--tRNA ligase (441 aa).

Belongs to the class-II aminoacyl-tRNA synthetase family. ProS type 2 subfamily. In terms of assembly, homodimer.

Its subcellular location is the cytoplasm. The catalysed reaction is tRNA(Pro) + L-proline + ATP = L-prolyl-tRNA(Pro) + AMP + diphosphate. Its function is as follows. Catalyzes the attachment of proline to tRNA(Pro) in a two-step reaction: proline is first activated by ATP to form Pro-AMP and then transferred to the acceptor end of tRNA(Pro). In Afipia carboxidovorans (strain ATCC 49405 / DSM 1227 / KCTC 32145 / OM5) (Oligotropha carboxidovorans), this protein is Proline--tRNA ligase.